A 106-amino-acid polypeptide reads, in one-letter code: UPF0122 protein Exig_1902 (106 aa).

It belongs to the UPF0122 family.

Its function is as follows. Might take part in the signal recognition particle (SRP) pathway. This is inferred from the conservation of its genetic proximity to ftsY/ffh. May be a regulatory protein. The protein is UPF0122 protein Exig_1902 of Exiguobacterium sibiricum (strain DSM 17290 / CCUG 55495 / CIP 109462 / JCM 13490 / 255-15).